Here is a 642-residue protein sequence, read N- to C-terminus: Fork head protein homolog 2 (642 aa).

Residues methionine 1–leucine 23 are disordered. The 65-residue stretch at isoleucine 96–phenylalanine 160 folds into the FHA domain. The fork-head DNA-binding region spans lysine 223–arginine 318. A compositionally biased stretch (basic residues) spans lysine 310–serine 319. Disordered stretches follow at residues lysine 310–lysine 392, valine 519–asparagine 574, and alanine 586–alanine 642. Residues serine 319, serine 321, serine 322, serine 334, and serine 336 each carry the phosphoserine modification. Residues threonine 348 to alanine 362 are compositionally biased toward low complexity. Polar residues-rich tracts occupy residues arginine 363–threonine 381, valine 519–lysine 552, and threonine 599–alanine 642. Residues serine 375, serine 535, and serine 626 each carry the phosphoserine modification.

In terms of processing, phosphorylated. Occurs periodically during mitosis.

Its subcellular location is the nucleus. Its function is as follows. Required for promoter sequence element PCB-driven, M-phase-specific transcription. Acts as a transcriptional activator with a role in the regulation of mitosis. Binds, cooperatively with mcm1, the CLB cluster regulatory elements throughout the cell cycle. Regulates the periodic transcription of cdc15 and spo12. Required for the correct timing, positioning and contraction of the division septum. The sequence is that of Fork head protein homolog 2 (fkh2) from Schizosaccharomyces pombe (strain 972 / ATCC 24843) (Fission yeast).